Here is a 97-residue protein sequence, read N- to C-terminus: Co-chaperonin GroES (97 aa).

This sequence belongs to the GroES chaperonin family. Heptamer of 7 subunits arranged in a ring. Interacts with the chaperonin GroEL.

It localises to the cytoplasm. In terms of biological role, together with the chaperonin GroEL, plays an essential role in assisting protein folding. The GroEL-GroES system forms a nano-cage that allows encapsulation of the non-native substrate proteins and provides a physical environment optimized to promote and accelerate protein folding. GroES binds to the apical surface of the GroEL ring, thereby capping the opening of the GroEL channel. The polypeptide is Co-chaperonin GroES (Proteus mirabilis (strain HI4320)).